Here is a 276-residue protein sequence, read N- to C-terminus: tRNA dimethylallyltransferase (276 aa).

The interval 9–12 is interaction with substrate tRNA; that stretch reads DSLS.

Belongs to the IPP transferase family. Monomer. The cofactor is Mg(2+).

The enzyme catalyses adenosine(37) in tRNA + dimethylallyl diphosphate = N(6)-dimethylallyladenosine(37) in tRNA + diphosphate. Its function is as follows. Catalyzes the transfer of a dimethylallyl group onto the adenine at position 37 in tRNAs that read codons beginning with uridine, leading to the formation of N6-(dimethylallyl)adenosine (i(6)A). The chain is tRNA dimethylallyltransferase (miaA) from Helicobacter pylori (strain Shi470).